The following is a 691-amino-acid chain: Protein vreteno (691 aa).

Residues 128-155 (QKEREITSDPVTSTEPMPTPGPAISATE) form a disordered region. Tudor domains follow at residues 366-427 (KLQS…LAGL) and 573-630 (APPI…FIFP).

Interacts with aub and piwi. In terms of tissue distribution, gonad-specific.

Its subcellular location is the cytoplasm. The protein localises to the cytoplasmic ribonucleoprotein granule. Functionally, gonad-specific protein essential for germline development to repress transposable elements and preventing their mobilization, which is essential for the germline integrity. Acts via the piRNA metabolic process in both germline and somatic gonadal tissues by mediating the repression of transposable elements during meiosis. Required for primary piRNA biogenesis in both germline and somatic gonadal tissues. This chain is Protein vreteno (vret), found in Drosophila melanogaster (Fruit fly).